A 167-amino-acid chain; its full sequence is Secreted LysM effector Blys6 (167 aa).

The N-terminal stretch at 1–16 (MKGLCVAACTLVLAAA) is a signal peptide. Positions 109 to 162 (KWYRIRRGDDCGPVASEFGISADQLIEWNPWLSADVDGTHYPCMNIWPTDNLCV) constitute a LysM domain.

It belongs to the secreted LysM effector family.

Functionally, might have a role in sequestration of chitin oligosaccharides (breakdown products of fungal cell walls that are released during invasion and act as triggers of host immunity) to dampen host defense. The protein is Secreted LysM effector Blys6 of Beauveria bassiana (strain ARSEF 2860) (White muscardine disease fungus).